A 241-amino-acid chain; its full sequence is Uracil-DNA glycosylase (241 aa).

D68 functions as the Proton acceptor in the catalytic mechanism.

This sequence belongs to the uracil-DNA glycosylase (UDG) superfamily. UNG family.

It is found in the cytoplasm. It catalyses the reaction Hydrolyzes single-stranded DNA or mismatched double-stranded DNA and polynucleotides, releasing free uracil.. Excises uracil residues from the DNA which can arise as a result of misincorporation of dUMP residues by DNA polymerase or due to deamination of cytosine. This chain is Uracil-DNA glycosylase, found in Rhizobium meliloti (strain 1021) (Ensifer meliloti).